Here is a 233-residue protein sequence, read N- to C-terminus: Purine nucleoside phosphorylase DeoD-type (233 aa).

Histidine 4 serves as a coordination point for a purine D-ribonucleoside. Residues glycine 20, arginine 24, arginine 43, and 87-90 (RIGT) contribute to the phosphate site. Residues 179–181 (EME) and 203–204 (SD) contribute to the a purine D-ribonucleoside site. Aspartate 204 functions as the Proton donor in the catalytic mechanism.

This sequence belongs to the PNP/UDP phosphorylase family. Homohexamer; trimer of homodimers.

It carries out the reaction a purine D-ribonucleoside + phosphate = a purine nucleobase + alpha-D-ribose 1-phosphate. It catalyses the reaction a purine 2'-deoxy-D-ribonucleoside + phosphate = a purine nucleobase + 2-deoxy-alpha-D-ribose 1-phosphate. Catalyzes the reversible phosphorolytic breakdown of the N-glycosidic bond in the beta-(deoxy)ribonucleoside molecules, with the formation of the corresponding free purine bases and pentose-1-phosphate. In Helicobacter pylori (strain HPAG1), this protein is Purine nucleoside phosphorylase DeoD-type.